Here is a 259-residue protein sequence, read N- to C-terminus: UPF0246 protein PST_1170 (259 aa).

It belongs to the UPF0246 family.

This Stutzerimonas stutzeri (strain A1501) (Pseudomonas stutzeri) protein is UPF0246 protein PST_1170.